The primary structure comprises 234 residues: Small ribosomal subunit protein uS3 (234 aa).

Positions 39 to 107 constitute a KH type-2 domain; it reads IRKFLKKELY…EVSINIKEVK (69 aa).

This sequence belongs to the universal ribosomal protein uS3 family. In terms of assembly, part of the 30S ribosomal subunit. Forms a tight complex with proteins S10 and S14.

Binds the lower part of the 30S subunit head. Binds mRNA in the 70S ribosome, positioning it for translation. The sequence is that of Small ribosomal subunit protein uS3 from Helicobacter acinonychis (strain Sheeba).